A 199-amino-acid chain; its full sequence is UPF0462 protein C4orf33 homolog (199 aa).

The protein belongs to the UPF0462 family.

The sequence is that of UPF0462 protein C4orf33 homolog from Rattus norvegicus (Rat).